A 399-amino-acid chain; its full sequence is Forkhead box protein A4 (399 aa).

Residues 119–213 (KPPYSYISLI…ENGCYLRRQK (95 aa)) constitute a DNA-binding region (fork-head). Residues 219 to 234 (RSKSGEREKKVNKPGD) are compositionally biased toward basic and acidic residues. A disordered region spans residues 219–290 (RSKSGEREKK…VGLSPTSEQA (72 aa)). Residues 267 to 277 (STGSSIHQASG) are compositionally biased toward polar residues.

The protein localises to the nucleus. In terms of biological role, transcriptional repressor involved in embryonic nervous system development. Plays a role in the induction and patterning of the anterior-posterior neural axis. Involved in the establishment of floor plate differentiation from neural plate cells during gastrulation. Binds the anf1 promoter sequence to restrict expression of anf1 to the anterior of the neural plate, thereby patterning the forebrain. Can bind to the HNF-3-alpha DNA target sequence. Cooperates with t/bra in a dose-dependent manner to specify dorsal mesoderm formation, including notochord. May be involved in the dorso-ventral patterning of the mesoderm. Binds to DNA via the target sequence 5'-[GA]TAAA[TC]A-3', with 5'-GTAAATA-3' being the preferred binding site. The polypeptide is Forkhead box protein A4 (Xenopus tropicalis (Western clawed frog)).